A 267-amino-acid chain; its full sequence is Acetyl-coenzyme A carboxylase carboxyl transferase subunit beta, chloroplastic (267 aa).

One can recognise a CoA carboxyltransferase N-terminal domain in the interval 12–267; it reads LWKKCDSCNI…TIHMILDLHN (256 aa). Residues C16, C19, C35, and C38 each contribute to the Zn(2+) site. The C4-type zinc-finger motif lies at 16–38; it reads CDSCNILISKFDFYKHDKVCPEC.

Belongs to the AccD/PCCB family. In terms of assembly, acetyl-CoA carboxylase is a heterohexamer composed of biotin carboxyl carrier protein, biotin carboxylase and 2 subunits each of ACCase subunit alpha and ACCase plastid-coded subunit beta (accD). The cofactor is Zn(2+).

It localises to the plastid. Its subcellular location is the chloroplast stroma. The enzyme catalyses N(6)-carboxybiotinyl-L-lysyl-[protein] + acetyl-CoA = N(6)-biotinyl-L-lysyl-[protein] + malonyl-CoA. Its pathway is lipid metabolism; malonyl-CoA biosynthesis; malonyl-CoA from acetyl-CoA: step 1/1. In terms of biological role, component of the acetyl coenzyme A carboxylase (ACC) complex. Biotin carboxylase (BC) catalyzes the carboxylation of biotin on its carrier protein (BCCP) and then the CO(2) group is transferred by the transcarboxylase to acetyl-CoA to form malonyl-CoA. In Cyanidium caldarium (Red alga), this protein is Acetyl-coenzyme A carboxylase carboxyl transferase subunit beta, chloroplastic.